The sequence spans 404 residues: Adenosylhomocysteinase (404 aa).

Aspartate 114 and glutamate 139 together coordinate substrate. 140–142 contacts NAD(+); sequence TTT. Positions 169 and 173 each coordinate substrate. NAD(+)-binding positions include asparagine 174, 203–208, glutamate 226, asparagine 261, 282–284, and asparagine 329; these read GYGWCG and AGH.

This sequence belongs to the adenosylhomocysteinase family. NAD(+) is required as a cofactor.

Its subcellular location is the cytoplasm. It catalyses the reaction S-adenosyl-L-homocysteine + H2O = L-homocysteine + adenosine. It participates in amino-acid biosynthesis; L-homocysteine biosynthesis; L-homocysteine from S-adenosyl-L-homocysteine: step 1/1. May play a key role in the regulation of the intracellular concentration of adenosylhomocysteine. This is Adenosylhomocysteinase from Thermotoga maritima (strain ATCC 43589 / DSM 3109 / JCM 10099 / NBRC 100826 / MSB8).